We begin with the raw amino-acid sequence, 491 residues long: Ketol-acid reductoisomerase (NADP(+)) (491 aa).

The 194-residue stretch at 15–208 (AQLGKCRFMG…GGHRAGVLES (194 aa)) folds into the KARI N-terminal Rossmann domain. Residues 45-48 (CGAQ), Arg68, Arg76, Ser78, and 108-110 (DKQ) each bind NADP(+). The active site involves His132. Gly158 provides a ligand contact to NADP(+). 2 consecutive KARI C-terminal knotted domains span residues 209 to 344 (SFVA…TAPQ) and 345 to 484 (YEGK…MTDM). Positions 217, 221, 389, and 393 each coordinate Mg(2+). Ser414 contributes to the substrate binding site.

Belongs to the ketol-acid reductoisomerase family. Mg(2+) serves as cofactor.

It carries out the reaction (2R)-2,3-dihydroxy-3-methylbutanoate + NADP(+) = (2S)-2-acetolactate + NADPH + H(+). The catalysed reaction is (2R,3R)-2,3-dihydroxy-3-methylpentanoate + NADP(+) = (S)-2-ethyl-2-hydroxy-3-oxobutanoate + NADPH + H(+). It functions in the pathway amino-acid biosynthesis; L-isoleucine biosynthesis; L-isoleucine from 2-oxobutanoate: step 2/4. Its pathway is amino-acid biosynthesis; L-valine biosynthesis; L-valine from pyruvate: step 2/4. Involved in the biosynthesis of branched-chain amino acids (BCAA). Catalyzes an alkyl-migration followed by a ketol-acid reduction of (S)-2-acetolactate (S2AL) to yield (R)-2,3-dihydroxy-isovalerate. In the isomerase reaction, S2AL is rearranged via a Mg-dependent methyl migration to produce 3-hydroxy-3-methyl-2-ketobutyrate (HMKB). In the reductase reaction, this 2-ketoacid undergoes a metal-dependent reduction by NADPH to yield (R)-2,3-dihydroxy-isovalerate. The protein is Ketol-acid reductoisomerase (NADP(+)) of Shigella dysenteriae serotype 1 (strain Sd197).